The primary structure comprises 340 residues: Ketol-acid reductoisomerase (NADP(+)) (340 aa).

One can recognise a KARI N-terminal Rossmann domain in the interval Val-3–Thr-182. Residues Tyr-26–Gln-29, Arg-49, Ser-53, and Asp-83–Gln-86 each bind NADP(+). His-108 is a catalytic residue. Residue Gly-134 participates in NADP(+) binding. In terms of domain architecture, KARI C-terminal knotted spans Thr-183–Val-328. 4 residues coordinate Mg(2+): Asp-191, Glu-195, Glu-227, and Glu-231. Ser-252 lines the substrate pocket.

Belongs to the ketol-acid reductoisomerase family. The cofactor is Mg(2+).

The catalysed reaction is (2R)-2,3-dihydroxy-3-methylbutanoate + NADP(+) = (2S)-2-acetolactate + NADPH + H(+). It catalyses the reaction (2R,3R)-2,3-dihydroxy-3-methylpentanoate + NADP(+) = (S)-2-ethyl-2-hydroxy-3-oxobutanoate + NADPH + H(+). The protein operates within amino-acid biosynthesis; L-isoleucine biosynthesis; L-isoleucine from 2-oxobutanoate: step 2/4. It participates in amino-acid biosynthesis; L-valine biosynthesis; L-valine from pyruvate: step 2/4. In terms of biological role, involved in the biosynthesis of branched-chain amino acids (BCAA). Catalyzes an alkyl-migration followed by a ketol-acid reduction of (S)-2-acetolactate (S2AL) to yield (R)-2,3-dihydroxy-isovalerate. In the isomerase reaction, S2AL is rearranged via a Mg-dependent methyl migration to produce 3-hydroxy-3-methyl-2-ketobutyrate (HMKB). In the reductase reaction, this 2-ketoacid undergoes a metal-dependent reduction by NADPH to yield (R)-2,3-dihydroxy-isovalerate. The polypeptide is Ketol-acid reductoisomerase (NADP(+)) (Streptococcus pneumoniae (strain JJA)).